A 356-amino-acid polypeptide reads, in one-letter code: MYNNNNNFGGGGYNQGGGYNSGGYNNNGGGYNNNNGGYNNNNNNNGGYNNNRPQQQQQQQQQYVNNNNNSFDNNGYGGDDDVTNNSDYQSTTRNIQQIQNAVQILTKLVQLLGTPKDSMDTREKIRNCVDSTTHLISSESGKVKNLTSLASRSRDSKNKLLYQKLVKEFNNCLQQFKDIAQVATKKEKTTPLPVAPDHQQPTTFGRNNNSNNNNQNNHFLNNQQPYYDDDNREDEHQSLMESSRRQQLAQIEAEREYQNSIIQERDEGIRKIEQSIVEINEIFVDLSGLVAEQGVMINTIEASLESTTINTKEGVNHLREASKNQKSSRNKMCWIVLILLIVCAVLGVILFFTLRK.

Over 1–333 the chain is Cytoplasmic; that stretch reads MYNNNNNFGG…NQKSSRNKMC (333 aa). Composition is skewed to low complexity over residues 32 to 74 and 207 to 224; these read NNNN…FDNN and NNNSNNNNQNNHFLNNQQ. Disordered stretches follow at residues 32–88 and 187–247; these read NNNN…NSDY and EKTT…RRQQ. A compositionally biased stretch (basic and acidic residues) spans 233 to 244; it reads EDEHQSLMESSR. The 63-residue stretch at 259–321 folds into the t-SNARE coiled-coil homology domain; sequence NSIIQERDEG…KEGVNHLREA (63 aa). A helical; Anchor for type IV membrane protein transmembrane segment spans residues 334–354; it reads WIVLILLIVCAVLGVILFFTL. Topologically, residues 355 to 356 are vesicular; it reads RK.

This sequence belongs to the syntaxin family. As to quaternary structure, component of the SNARE complex composed of syn7A, syn8A, vamp7A and vti1A. Interacts with nsfA, snpA and snpC.

The protein resides in the endosome membrane. Its function is as follows. Involved in the targeting and/or fusion of transport vesicles to their target membrane during transport of proteins from the early endosome to the lysosome. Required for fusion of late endosomes with lysosomes and homotypic lysosomal fusion. May be involved in protein trafficking from the plasma membrane to the early endosome (EE) as well as in homotypic fusion of endocytic organelles. This is Syntaxin-7A from Dictyostelium discoideum (Social amoeba).